The primary structure comprises 467 residues: Chromosomal replication initiator protein DnaA (467 aa).

Positions 1–85 are domain I, interacts with DnaA modulators; it reads MSLSLWQQCL…FEVGAKPASS (85 aa). The tract at residues 85 to 130 is domain II; the sequence is SLQKGAVSPAAAAIPAAQVQTARVAPTIVRPGWDNVPAPAEPTYRS. The interval 131–347 is domain III, AAA+ region; it reads NVNVKHTFDN…GALNRVIANA (217 aa). The ATP site is built by Gly175, Gly177, Lys178, and Thr179. Residues 348 to 467 form a domain IV, binds dsDNA region; sequence NFTGRAITID…FSNLIRTLSS (120 aa).

Belongs to the DnaA family. As to quaternary structure, oligomerizes as a right-handed, spiral filament on DNA at oriC.

The protein resides in the cytoplasm. Plays an essential role in the initiation and regulation of chromosomal replication. ATP-DnaA binds to the origin of replication (oriC) to initiate formation of the DNA replication initiation complex once per cell cycle. Binds the DnaA box (a 9 base pair repeat at the origin) and separates the double-stranded (ds)DNA. Forms a right-handed helical filament on oriC DNA; dsDNA binds to the exterior of the filament while single-stranded (ss)DNA is stabiized in the filament's interior. The ATP-DnaA-oriC complex binds and stabilizes one strand of the AT-rich DNA unwinding element (DUE), permitting loading of DNA polymerase. After initiation quickly degrades to an ADP-DnaA complex that is not apt for DNA replication. Binds acidic phospholipids. This is Chromosomal replication initiator protein DnaA from Klebsiella pneumoniae (strain 342).